Reading from the N-terminus, the 312-residue chain is Taste receptor type 2 member 62 (312 aa).

At 1–4 the chain is on the extracellular side; the sequence is MPSL. The helical transmembrane segment at 5–27 threads the bilayer; sequence PTLIFIAIFCLESLAAMLQNGFL. Residues 28–39 lie on the Cytoplasmic side of the membrane; it reads VTMLGREWVRCR. The helical transmembrane segment at 40–62 threads the bilayer; it reads MLSTSDMIVACLAASRFCLHGVA. The Extracellular portion of the chain corresponds to 63–81; sequence MANNLLASLDFSRAVPYMN. The chain crosses the membrane as a helical span at residues 82 to 104; it reads IFWDLFNALTLWFTALLAAFYCV. Residues 105–127 are Cytoplasmic-facing; the sequence is KISSFSHPTFAWLKWRISRLVPK. The helical transmembrane segment at 128–150 threads the bilayer; the sequence is LIKGSLIICGLEVISSATGNILF. Over 151 to 182 the chain is Extracellular; sequence GQRKVSLSSYRNETLVYRVQASFQLYFFLYDG. Asn-162 carries an N-linked (GlcNAc...) asparagine glycan. A helical membrane pass occupies residues 183–205; it reads FVWSIPFLLFLVSTVLLIVSLCW. The Cytoplasmic portion of the chain corresponds to 206 to 231; the sequence is QLGQMRDLRPGPCDPSTQAYTMALKS. A helical membrane pass occupies residues 232–254; sequence LTFSLIFCTLYFLSLFASALKII. Residues 255 to 258 lie on the Extracellular side of the membrane; that stretch reads NFQN. Residues 259 to 281 traverse the membrane as a helical segment; that stretch reads HWHWAWEVLIYANICLHSTVLVL. Topologically, residues 282–312 are cytoplasmic; the sequence is RSPKLKKGLKTWPQLQCPCDAGSQGFGRCWP.

This sequence belongs to the G-protein coupled receptor T2R family.

The protein resides in the membrane. Its function is as follows. Receptor that may play a role in the perception of bitterness and is gustducin-linked. May play a role in sensing the chemical composition of the gastrointestinal content. The activity of this receptor may stimulate alpha gustducin, mediate PLC-beta-2 activation and lead to the gating of TRPM5. This Pan paniscus (Pygmy chimpanzee) protein is Taste receptor type 2 member 62 (TAS2R62).